A 497-amino-acid chain; its full sequence is Serine/threonine-protein phosphatase 2A 56 kDa regulatory subunit beta isoform (497 aa).

The segment covering 1–19 has biased composition (low complexity); it reads METKLPPASTPTSPSSPGL. Disordered regions lie at residues 1–55 and 475–497; these read METK…YQSN and TQGA…GGQS. Phosphoserine; by CLK2 is present on residues Ser32, Ser35, Ser44, Ser46, Ser47, and Ser48. A compositionally biased stretch (basic residues) spans 34 to 45; the sequence is RSLRRARPRRSH.

The protein belongs to the phosphatase 2A regulatory subunit B56 family. As to quaternary structure, component of the serine/threonine-protein phosphatase 2A complex (PP2A). This complex consists of a common heterodimeric core enzyme, composed of a 36 kDa catalytic subunit (subunit C) and a 65 kDa constant scaffold subunit (PR65 or subunit A), that associates with a variety of regulatory subunits. Proteins that associate with the core dimer include three families of regulatory subunits B (the R2/B/PR55/B55, R3/B''/PR72/PR130/PR59 and R5/B'/B56 families), the 48 kDa variable regulatory subunit, viral proteins, and cell signaling molecules. Interacts with SGO1. Interacts with AKT1. Interacts with CUL3 and KLHL15; this interaction leads to proteasomal degradation. Ubiquitinated by E3 CUL3-KLHL15 complex; this modification leads to proteasomal degradation. As to expression, highest expression in brain.

Its subcellular location is the cytoplasm. As the regulatory component of the serine/threonine-protein phosphatase 2A (PP2A) holoenzyme, modulates substrate specificity, subcellular localization, and responsiveness to phosphorylation. The phosphorylated form mediates the interaction between PP2A and AKT1, leading to AKT1 dephosphorylation. The protein is Serine/threonine-protein phosphatase 2A 56 kDa regulatory subunit beta isoform (PPP2R5B) of Homo sapiens (Human).